The chain runs to 413 residues: DnaJ protein homolog (413 aa).

In terms of domain architecture, J spans 10 to 75 (NTKYYEILGV…REIYDQYGED (66 aa)). Residues 133–217 (GTSKKLSLSR…CKGEKVVQEK (85 aa)) form a CR-type zinc finger. CXXCXGXG motif repeat units lie at residues 146-153 (CSKCKGKG), 162-169 (CPGCQGSG), 189-196 (CNECKGTG), and 205-212 (CSQCKGEK). The tract at residues 387–413 (RRKQAQEAYDEDEDMHGGAQRVQCAQQ) is disordered. Cys410 is modified (cysteine methyl ester). A lipid anchor (S-farnesyl cysteine) is attached at Cys410. A propeptide spans 411–413 (AQQ) (removed in mature form).

In terms of tissue distribution, expressed in seedlings in all tissues, but exceedingly high levels in hypocotyledons and roots.

It is found in the cell membrane. Its function is as follows. Plays a continuous role in plant development probably in the structural organization of compartments. This is DnaJ protein homolog (DNAJ1) from Cucumis sativus (Cucumber).